Here is a 134-residue protein sequence, read N- to C-terminus: Small ribosomal subunit protein uS9 (134 aa).

The segment at 113 to 134 is disordered; the sequence is REVERKKYGLKKARRAPQFSKR. The span at 120–134 shows a compositional bias: basic residues; the sequence is YGLKKARRAPQFSKR.

Belongs to the universal ribosomal protein uS9 family.

In Thermotoga maritima (strain ATCC 43589 / DSM 3109 / JCM 10099 / NBRC 100826 / MSB8), this protein is Small ribosomal subunit protein uS9 (rpsI).